Consider the following 2979-residue polypeptide: MAGEGAEIAIIGSGCRFPGNASSPSKLWALLQNPTSVASKVPALGGYYHEDALYHGHANVKEAYLLAGEETHRRFDAAFFGIKPSEANVLDPQVRLLLETVYEALEDGGQPMDSLRGSDTAVYAGQMVNDYELLMYRDLENLGRYHATGTSRTMVSNRVSFFFDWHGPSMTIDTACSSSLVALHNAVQQLQSGHSRVAIVAGANLIHDVGSFIAESSLQMLSPNGQSRMWDADADGYARGEGVAAIVLKTREAAEADGDHIECIIRGTAVNQDGKTPGQTMPSASAQAQLIRDCYARAGLDLTNSLHRPQYFEAHGTGTPAGDPIEAEAISSAFFPGASSSLSIFVGSIKTVVGHTEGTAGIAGLLKASLALQNKLIPPNLLFNTLNPRIKPFYDHLHVPTALTPWPSVASGYPRRASVNSFGFGGTNAHAILESYSPPSHPTQVLSTVYIPFVFSAFSEASLKSYLVAFSTYLRENKTTYDLRDIAYSLDARRTRHQVVTTISASTADELCDSIEKKLELSRADPDQRVGVRATHQTAEARKPRVLGVFTGQGAQWAQMGLELITASAVAKSTVESLQKRLDRLPDADRPTWSLVQELERDSSSSHIMEAKFSQPLCTAIQILQINLLRAAGIEFTAVVGHSSGEIAAAYAAGRISAEDAICIAYYRGLYSSLAYGLNGKPGAMMAVGTSPEDAEDLLGFPEFEGRACVAAVNSATSVTISGDQDALEELKVVFEDEHKQARFLKVDKAYHSHHMKECSAKYLESLAALNIQVGSGSQTSWFSSVYEQEVKGRDFLKGPYWDDNMVEPVLFMQAVDNACASTRHFDLAIELGPHPALKGPALQTIQERLSHQIPYTGLFTRGVPAITAFSEGLGYCWTHLGQGVVNLQNYDNFISGNLKCRLVKGLPTYAWDHENEYWHETRYARAVRMRPGPVHDLLGHLTPNSTDQDMRWRQFLRLPEVKWVTGHRLQNLTVFPAAGYIVSVIEAAMSLCKDVSVTLIEIIDVDIDSALVFDNDDVSIEVIISLTGITRRENKAIEADFKYHATSGKDTEPLKLKASGRVRIHLGEACPTVLPPRAQKPPNLVSVSEKKFYDSISELGYQYSGQFASLERIERKLGAATGFISITEASKYLIHPGALDAAFQSTHLTYAAPEDGESRSIYIPRRIKRLTFNPNLCIHARNKQTDLAFDASQPIELPHANKLCDINLYPEHLDHAIIRVQGLECVPFSRQTAKDDREAFSNIVWDVLDPDVEAITKDYHSKTSDSLELAGLLERVAAFYLRSLEKEVPENHPSRYEAPCKGLLQYASNISSQSCATRSQLTQAHWDHDTSEVLTAVCEPYADSIDMKLVFDCGKNLASSVMGESTAGEVSGLMQEWYRSGSGVKNFTAHLAGILKQIVHRYPQMHILEVGPEAGAATNVILTEIGPAFASYTVATSTDILFNPEKALPDIYKAKVLPKELDLSKNPRDQGFTEKSFDVVVASLVLHQSPEFEKCLRNARRLLKPGGHLIVLELRPSLPYFLSVIFSAKSHQWFNAEEGRTSFPAITLLEWDSLLRQTGFSGIDTSTVEQPEIGGPFSIFVSQAMDEKIAFLREPLSTAFPISSPGPTIQDLLILGGNSLKTARLVNQLSAVLKEHCGSLRTARSMGFVDDISPKTIILSLTDLDTNEFKQLDESKWDSLKKIVSHTGTLVWVTHGRLADNPHANMMLGLLRGSARDNSTLDYLLLDIEEAHRIEHSVIAEAILRHRAASQWRESESISYSVESELVMDKAGRFLIPRLMMNEKMNDRYNSNWREIREPARPSLDNIAISASGSGWDVVLEPLPPVRRAQLRTTHSLLSPIRVTGSGCMYISLCSGLLSGDKVIALSSKNNSVVCPQDELSVPVEVPPGSEARFLWLTAHYLLASSILKGLSEEDQVLIHEPSLEFSTAIENEASMLGVEVTFTTKNQDAPDSWMVIHPFSFEQSALARFEDEIFSVFINMAPSQEETESVADIFATALPGHCRKESLRSLFGNKAWTPKGSQIKEIQRRLLRAVSWASGMLTKSHCDGMTSLAIDVLPGTVGQLEPFAVIEWDTVSEVSVKVQPVDTLVSFSDKKTYWLVGLTGGLGLSLCEWMVRRGARYFVISSRQPNIERGWLDGMHKKGVRVEISACDLSKRDQVEGLYAEICSSMPAIGGVAQGAMVLEDVAIQNMTLEQLSRVTKPKVDGSIYLNELFQENTLDFFVFFSSVSSVVGNHGQANYAAANTFMASLAEQRRRKGLAASVMDIGAVFGVGYITRSGNEKLMGKVTLQSGGYVRTSERDFHQLFGEAVLAGKPGSTGPIELVSGVRKVSQREEERPVWETWPRMSHFVMDHEGPEYTTDASNKAHIPVKVRLAEARNNEEAYGIVWEDFVRKLQSLFQIDITSLTKAELGAMRLDQMGIDSLTAVEIRGWLMKTFEVNLPVLKILNGISVGELVDTATEAIPSHLVPNLAGYPAEQTSSQNSDSGQDMASSFDTVVNNPFDSDQVSSFHSDLSSNQEDATATDSKSTVLKSIPVSFTQARFYPSGLFLEDKVGLNHIAWARFTGEVSAERLQRALHSLAEQHEILRTAFFDQAGKQMQHILNTSPVYLEHKQIQNEDEVTELVMSLQKEYVYDVARGETMRVILLSRSATENYFILGVHPLVLDATSFQIYLKWLAFHYTSPNKIHRVKQFAESSEQRHADYAAGKFEAELQFWRNEFSTPIKPLPLLTVAKVNERPKLKAYENIRSSLTIEVDTKTRILDICRRIRATPFHFYLAVLRVLLLQYTAYGDNSEDVTIAVAENGRGYDAEEMDVIGPLYNLVLVRILAQQTTRFEDLLETTRNKTYAALSNSKLPYPMLVEELGLQRIAKDYPFVQVFADYRVGQRTTAEFGEDNKLVMMGFDFNVPYDVFLDTIDEPEGECLHELFLRNDLFGREEADRLARSYKSLVVAFAEHPAMTLGQAALAESECGGKIAQ.

The region spanning 5–435 (GAEIAIIGSG…GTNAHAILES (431 aa)) is the Ketosynthase family 3 (KS3) domain. Catalysis depends on for beta-ketoacyl synthase activity residues Cys176, His315, and His355. The interval 549-864 (VFTGQGAQWA…PYTGLFTRGV (316 aa)) is malonyl-CoA:ACP transacylase (MAT) domain. Catalysis depends on Ser643, which acts as the For malonyltransferase activity. The tract at residues 936 to 1070 (HDLLGHLTPN…GRVRIHLGEA (135 aa)) is N-terminal hotdog fold. Positions 936-1234 (HDLLGHLTPN…ECVPFSRQTA (299 aa)) are dehydratase (DH) domain. The region spanning 936 to 1235 (HDLLGHLTPN…CVPFSRQTAK (300 aa)) is the PKS/mFAS DH domain. His968 acts as the Proton acceptor; for dehydratase activity in catalysis. The tract at residues 1085-1235 (LVSVSEKKFY…CVPFSRQTAK (151 aa)) is C-terminal hotdog fold. The active-site Proton donor; for dehydratase activity is Asp1141. The interval 1387-1572 (NFTAHLAGIL…GIDTSTVEQP (186 aa)) is inactive methyltransferase (MT) domain. The interval 2098–2271 (TYWLVGLTGG…AASVMDIGAV (174 aa)) is ketoreductase (KR)domain. Positions 2380–2465 (RNNEEAYGIV…ELVDTATEAI (86 aa)) constitute a Carrier domain. At Ser2425 the chain carries O-(pantetheine 4'-phosphoryl)serine. The segment at 2476 to 2497 (YPAEQTSSQNSDSGQDMASSFD) is disordered. The span at 2479-2497 (EQTSSQNSDSGQDMASSFD) shows a compositional bias: polar residues. A condensation region spans residues 2534-2970 (KSIPVSFTQA…MTLGQAALAE (437 aa)).

Interacts with TwmE. The cofactor is pantetheine 4'-phosphate.

The catalysed reaction is 5-aminopentanoate + 7 malonyl-CoA + acetyl-CoA + 11 NADPH + 17 H(+) = wortmanamide A + 7 CO2 + 11 NADP(+) + 8 CoA + 6 H2O. It catalyses the reaction 5-aminopentanoate + 8 malonyl-CoA + acetyl-CoA + 13 NADPH + 20 H(+) = wortmanamide B + 8 CO2 + 13 NADP(+) + 9 CoA + 7 H2O. It participates in secondary metabolite biosynthesis. Functionally, polyketide synthase-nonribosomal peptide synthetase; part of the gene cluster that mediates the biosynthesis of wortmanamides A and B, reduced long-chain polyketides amidated with a specific omega-amino acid, 5-aminopentanoic acid (5PA). The PKS modules of TwmB are involved in the synthesis of the polyketide backbone, whereas the non-canonical C domain of TwmB is a bonafide condensation domain that specifically selects 5PA and catalyzes amidation to release polyketide chain. The C domain clearly prefers C16 and C18 fatty acyl substrates, which is consistent with simultaneous formation of both octaketide and nonaketide acyl amides wortmanamides A and B. Because TwmB lacks a designated enoylreductase (ER) domain, the required activity is provided the enoyl reductase TwmE. The roles of the remaining enzymes have still to be clarified. The protein is Polyketide synthase-nonribosomal peptide synthetase TwmB of Talaromyces wortmannii (Penicillium wortmannii).